Reading from the N-terminus, the 393-residue chain is Cholinephosphotransferase 1 (393 aa).

The Lumenal segment spans residues 1–40 (MGFFIPQSSLGNLKLYKYQSDDRSFLSNHVLRPFWRKFAT). The helical transmembrane segment at 41–61 (IFPLWMAPNLVTLLGFCFIIF) threads the bilayer. Over 62–172 (NVLTTLYYDP…YHTHKLYLAE (111 aa)) the chain is Cytoplasmic. Residues 173-193 (FCGPVEGIIVLCISFIAVGIY) traverse the membrane as a helical segment. Residues 194–210 (GPQTIWHTKVAQFSWQD) are Lumenal-facing. A helical membrane pass occupies residues 211 to 231 (FVFDVETVHLMYAFCTGALIF). At 232 to 263 (NIVTAHTNVVRYYESQSTKSATPSKTAENISK) the chain is on the cytoplasmic side. A helical transmembrane segment spans residues 264 to 284 (AVNGLLPFFAYFSSIFTLVLI). Q285 is a topological domain (lumenal). A helical transmembrane segment spans residues 286 to 306 (PSFISLALILSIGFSVAFVVG). Topologically, residues 307 to 320 (RMIIAHLTMQPFPM) are cytoplasmic. Residues 321–341 (VNFPFLIPTIQLVLYAFMVYV) traverse the membrane as a helical segment. Residues 342 to 348 (LDYQKGS) lie on the Lumenal side of the membrane. A helical transmembrane segment spans residues 349–369 (IVSALVWMGLGLTLAIHGMFI). The Cytoplasmic portion of the chain corresponds to 370–393 (NDIIYDITTFLDIYALSIKHPKEI).

The protein belongs to the CDP-alcohol phosphatidyltransferase class-I family. Mg(2+) is required as a cofactor.

Its subcellular location is the microsome membrane. The protein resides in the endoplasmic reticulum membrane. The protein localises to the mitochondrion outer membrane. The enzyme catalyses CDP-choline + a 1,2-diacyl-sn-glycerol = a 1,2-diacyl-sn-glycero-3-phosphocholine + CMP + H(+). It carries out the reaction CDP-N,N-dimethylethanolamine + a 1,2-diacyl-sn-glycerol = a 1,2-diacyl-sn-glycero-3-phospho-N,N-dimethylethanolamine + CMP + H(+). Its pathway is phospholipid metabolism; phosphatidylcholine biosynthesis; phosphatidylcholine from phosphocholine: step 2/2. With respect to regulation, requires a divalent cation activator, and is inhibited by CMP. Activated by phospholipids, especially phosphatidylcholine. Catalyzes the final step in the CDP-choline route leading to phosphatidylcholin (PC). Preferentially uses CDP-monomethylethanolamine as aminoalcohol substrate. Shows highest activity toward di- and mono-unsaturated diacylglycerol species as lipid substrates. The CDP-choline pathway only contributes to net PC synthesis if exogenous choline is present. In its absence, this pathway recycles choline from PC turnover and may contribute to maintaining the proper PC species composition. The sequence is that of Cholinephosphotransferase 1 (CPT1) from Saccharomyces cerevisiae (strain ATCC 204508 / S288c) (Baker's yeast).